Here is a 197-residue protein sequence, read N- to C-terminus: MEEKRTAFIERKTTETSIEVDINLDGEGKYDIDTGIGFFDHMLELMSKHGLIDLKVKVIGDLKVDSHHTVEDTGIVIGECINKALGNKKSINRYGTSFVPMDESLCQVSMDISGRAFLVFDGEFTCEKLGDFQTEMVEEFFRALAFNAGITLHARVIYGKNNHHMIEGLFKAFGRALSEAVSKNTRIKGVMSTKGSI.

Belongs to the imidazoleglycerol-phosphate dehydratase family.

It localises to the cytoplasm. The enzyme catalyses D-erythro-1-(imidazol-4-yl)glycerol 3-phosphate = 3-(imidazol-4-yl)-2-oxopropyl phosphate + H2O. Its pathway is amino-acid biosynthesis; L-histidine biosynthesis; L-histidine from 5-phospho-alpha-D-ribose 1-diphosphate: step 6/9. The polypeptide is Imidazoleglycerol-phosphate dehydratase (Clostridium acetobutylicum (strain ATCC 824 / DSM 792 / JCM 1419 / IAM 19013 / LMG 5710 / NBRC 13948 / NRRL B-527 / VKM B-1787 / 2291 / W)).